Reading from the N-terminus, the 1165-residue chain is Protein hsr-9 (1165 aa).

Disordered stretches follow at residues 1–26, 70–578, 608–713, and 874–913; these read MASSSNTMEFEEDDSTVTQTSLPTTT, AEDE…TEME, KYSM…IPLK, and TRARKPTTVSNQAKPKGRKKKGVDLVSSRGGSASPAEEEE. The span at 16 to 26 shows a compositional bias: low complexity; that stretch reads TVTQTSLPTTT. Basic and acidic residues-rich tracts occupy residues 98–114, 123–140, and 149–162; these read KDAKSGESMNDSEKSES, TFEKKIISMDTSDDKLDI, and DTEKPEENEEKVVG. Acidic residues-rich tracts occupy residues 163-179, 211-230, and 280-289; these read DEDEEDIDDVQEDDEDE, EKEEPENEDDTEEPENEVEV, and GESEANEENQ. The span at 306-317 shows a compositional bias: polar residues; the sequence is ATVSSTPSSNTP. A compositionally biased stretch (basic and acidic residues) spans 397-408; sequence NTEHPTEEETPK. The segment covering 415 to 431 has biased composition (low complexity); it reads SAASSSATSSAVPTPRS. Positions 446–461 are enriched in basic and acidic residues; the sequence is LQEKETEDPTKTHDTN. The span at 533–543 shows a compositional bias: acidic residues; sequence DPIEEADETIE. Over residues 554 to 563 the composition is skewed to low complexity; it reads AAKSAPSSSK. Basic and acidic residues-rich tracts occupy residues 662 to 671 and 694 to 708; these read KKEEEHHEND and SEASDIKTPPAKKEP. Residues 923 to 1028 enclose the BRCT domain; it reads IGKNIFTGKV…KCVDYTDYVL (106 aa).

In terms of tissue distribution, expressed in germ cells.

It is found in the nucleus. In terms of biological role, may have a role in DNA double-strand break repair following gamma-irradiation. The polypeptide is Protein hsr-9 (Caenorhabditis elegans).